The following is a 151-amino-acid chain: Putative calcium-binding protein CML23 (151 aa).

EF-hand domains lie at 2-37 (VASD…SLGE), 39-74 (MPDE…MEAD), 84-119 (ETCR…LGTH), and 120-151 (LDVA…MMMA). Asp15, Asp17, Asp19, Lys21, Glu26, Asp52, Asp54, Asp56, and Glu63 together coordinate Ca(2+). The Ca(2+) site is built by Asp133, Asn135, Asp137, and Glu144.

Functionally, potential calcium sensor. The chain is Putative calcium-binding protein CML23 (CML23) from Oryza sativa subsp. japonica (Rice).